A 383-amino-acid polypeptide reads, in one-letter code: Putative glutamate--cysteine ligase 2-2 (383 aa).

The protein belongs to the glutamate--cysteine ligase type 2 family. YbdK subfamily.

It carries out the reaction L-cysteine + L-glutamate + ATP = gamma-L-glutamyl-L-cysteine + ADP + phosphate + H(+). Functionally, ATP-dependent carboxylate-amine ligase which exhibits weak glutamate--cysteine ligase activity. The polypeptide is Putative glutamate--cysteine ligase 2-2 (Legionella pneumophila (strain Paris)).